The sequence spans 616 residues: Chaperone protein HscA (616 aa).

The protein belongs to the heat shock protein 70 family.

In terms of biological role, chaperone involved in the maturation of iron-sulfur cluster-containing proteins. Has a low intrinsic ATPase activity which is markedly stimulated by HscB. Involved in the maturation of IscU. The polypeptide is Chaperone protein HscA (Shigella boydii serotype 18 (strain CDC 3083-94 / BS512)).